The sequence spans 133 residues: Putative pre-16S rRNA nuclease (133 aa).

It belongs to the YqgF nuclease family.

It localises to the cytoplasm. Its function is as follows. Could be a nuclease involved in processing of the 5'-end of pre-16S rRNA. The polypeptide is Putative pre-16S rRNA nuclease (Alcanivorax borkumensis (strain ATCC 700651 / DSM 11573 / NCIMB 13689 / SK2)).